The following is a 120-amino-acid chain: Holo-[acyl-carrier-protein] synthase (120 aa).

Positions 8 and 58 each coordinate Mg(2+).

This sequence belongs to the P-Pant transferase superfamily. AcpS family. Mg(2+) serves as cofactor.

The protein localises to the cytoplasm. The enzyme catalyses apo-[ACP] + CoA = holo-[ACP] + adenosine 3',5'-bisphosphate + H(+). In terms of biological role, transfers the 4'-phosphopantetheine moiety from coenzyme A to a Ser of acyl-carrier-protein. This is Holo-[acyl-carrier-protein] synthase from Streptococcus sanguinis (strain SK36).